The chain runs to 324 residues: Fructose-1,6-bisphosphatase class 1 (324 aa).

4 residues coordinate Mg(2+): glutamate 88, aspartate 107, leucine 109, and aspartate 110. Substrate contacts are provided by residues 110-113 (DGSS), asparagine 199, and lysine 265. Position 271 (glutamate 271) interacts with Mg(2+).

This sequence belongs to the FBPase class 1 family. Homotetramer. The cofactor is Mg(2+).

It localises to the cytoplasm. It catalyses the reaction beta-D-fructose 1,6-bisphosphate + H2O = beta-D-fructose 6-phosphate + phosphate. It functions in the pathway carbohydrate biosynthesis; gluconeogenesis. The polypeptide is Fructose-1,6-bisphosphatase class 1 (Neisseria meningitidis serogroup A / serotype 4A (strain DSM 15465 / Z2491)).